The sequence spans 241 residues: 2-C-methyl-D-erythritol 4-phosphate cytidylyltransferase (241 aa).

Belongs to the IspD/TarI cytidylyltransferase family. IspD subfamily. In terms of assembly, homodimer.

It catalyses the reaction 2-C-methyl-D-erythritol 4-phosphate + CTP + H(+) = 4-CDP-2-C-methyl-D-erythritol + diphosphate. It participates in isoprenoid biosynthesis; isopentenyl diphosphate biosynthesis via DXP pathway; isopentenyl diphosphate from 1-deoxy-D-xylulose 5-phosphate: step 2/6. In terms of biological role, catalyzes the formation of 4-diphosphocytidyl-2-C-methyl-D-erythritol from CTP and 2-C-methyl-D-erythritol 4-phosphate (MEP). The sequence is that of 2-C-methyl-D-erythritol 4-phosphate cytidylyltransferase from Yersinia pseudotuberculosis serotype I (strain IP32953).